A 595-amino-acid chain; its full sequence is DNA damage-binding protein CMR1 (595 aa).

Residues 20–79 (ALLDSLGLDPAGASSPFGSSPAPTSNKTKPKPKPAPKKRKAAAVIAVDEGPRRRSGRIAG) form a disordered region. The segment covering 29–46 (PAGASSPFGSSPAPTSNK) has biased composition (low complexity). Basic residues predominate over residues 47 to 60 (TKPKPKPAPKKRKA). WD repeat units lie at residues 185–226 (VTNE…MEKP), 255–297 (HAKN…ELFS), 300–339 (DEDL…RESG), and 349–389 (GRGA…SISS). The segment at 397-429 (AIEEEEEGTSTLSGQSSSLPHDTHPTRESDYST) is disordered. A compositionally biased stretch (low complexity) spans 405–415 (TSTLSGQSSSL). Positions 417–426 (HDTHPTRESD) are enriched in basic and acidic residues. WD repeat units lie at residues 448 to 487 (QHGK…SLVD), 519 to 556 (LRAQ…VGLW), and 558 to 595 (DDVT…GDHI).

It belongs to the WD repeat DDB2/WDR76 family.

Its function is as follows. DNA-binding protein that binds to both single- and double-stranded DNA. Binds preferentially to UV-damaged DNA. May be involved in DNA-metabolic processes. The protein is DNA damage-binding protein CMR1 of Cryptococcus neoformans var. neoformans serotype D (strain B-3501A) (Filobasidiella neoformans).